The sequence spans 477 residues: tRNA-2-methylthio-N(6)-dimethylallyladenosine synthase (477 aa).

An MTTase N-terminal domain is found at 3-120; that stretch reads KKLFIKTWGC…LPEMINQIKG (118 aa). Residues C12, C49, C83, C157, C161, and C164 each contribute to the [4Fe-4S] cluster site. The Radical SAM core domain occupies 143–375; the sequence is KAEGPTAFVS…QNRITQQALR (233 aa). A TRAM domain is found at 378-441; the sequence is RNMIDSEQRV…ANSLRGDVLR (64 aa).

Belongs to the methylthiotransferase family. MiaB subfamily. In terms of assembly, monomer. The cofactor is [4Fe-4S] cluster.

Its subcellular location is the cytoplasm. It carries out the reaction N(6)-dimethylallyladenosine(37) in tRNA + (sulfur carrier)-SH + AH2 + 2 S-adenosyl-L-methionine = 2-methylsulfanyl-N(6)-dimethylallyladenosine(37) in tRNA + (sulfur carrier)-H + 5'-deoxyadenosine + L-methionine + A + S-adenosyl-L-homocysteine + 2 H(+). Its function is as follows. Catalyzes the methylthiolation of N6-(dimethylallyl)adenosine (i(6)A), leading to the formation of 2-methylthio-N6-(dimethylallyl)adenosine (ms(2)i(6)A) at position 37 in tRNAs that read codons beginning with uridine. The polypeptide is tRNA-2-methylthio-N(6)-dimethylallyladenosine synthase (Pseudoalteromonas atlantica (strain T6c / ATCC BAA-1087)).